The sequence spans 1181 residues: Regulator of nonsense transcripts UPF2 (1181 aa).

2 coiled-coil regions span residues 6–41 (DESH…NNLN) and 260–309 (HKLL…AEAL). The region spanning 61–264 (TAVIKKLKQI…LLQSEHKLLL (204 aa)) is the MIF4G 1 domain. 2 disordered regions span residues 309-348 (LDMQ…IWDD) and 375-459 (PKSN…KEKG). The segment covering 375-389 (PKSNEQSAKAKEKLS) has biased composition (basic and acidic residues). Residues 398–412 (NQQTTEDTTEVSADS) are compositionally biased toward polar residues. Residues 415–459 (MDDRSNAEQPKEKEEVEKEKAKDTKKEKGKEKDSEKKMEHEKEKG) show a composition bias toward basic and acidic residues. 2 coiled-coil regions span residues 425–451 (KEKE…SEKK) and 539–559 (VQML…MNIE). MIF4G domains lie at 469–655 (RLLQ…LCKP) and 672–871 (YVRK…NLRP). Residues 735 to 755 (DEFVVAVVDEVLEEIRVGLEL) form a binds to UPF3 region. The span at 893–911 (EHASSGDKVSIERHSDTKP) shows a compositional bias: basic and acidic residues. The tract at residues 893–991 (EHASSGDKVS…GPGSDDDKFR (99 aa)) is disordered. Over residues 912–926 (SNKSSSDVISSNGKS) the composition is skewed to low complexity. The segment covering 927-941 (TAKDIRENGEAHGEE) has biased composition (basic and acidic residues). Residues 972-985 (GDGDDYDDGDGPGS) are compositionally biased toward acidic residues. The interval 981 to 1181 (DGPGSDDDKF…GGGSYHARRK (201 aa)) is sufficient for interaction with UPF1 C-terminus. 2 interaction with UPF1 regions span residues 999 to 1023 (VDLE…EQRK) and 1066 to 1111 (ENGE…AELE). The necessary for interaction with UPF1 stretch occupies residues 999–1102 (VDLEEQADFD…PSDCALVQST (104 aa)). Positions 1000 to 1021 (DLEEQADFDQELKALLQESMEQ) form a coiled coil. The segment at 1129–1181 (EEANGLGTQILNWTSGGSRGSTRTGEGSGKSGGSRHRFYYHQGGGGSYHARRK) is disordered. The segment covering 1142-1153 (TSGGSRGSTRTG) has biased composition (low complexity).

It belongs to the RENT2 family. In terms of assembly, found in a post-splicing messenger ribonucleoprotein (mRNP) complex. Associates with the exon junction complex (EJC). Interacts with UPF1 and UPF3.

Its subcellular location is the nucleus. The protein resides in the nucleolus. It is found in the cytoplasm. The protein localises to the perinuclear region. Recruited by UPF3 associated with the EJC core at the cytoplasmic side of the nuclear envelope and the subsequent formation of an UPF1-UPF2-UPF3 surveillance complex (including UPF1 bound to release factors at the stalled ribosome) is believed to activate NMD. In cooperation with UPF3 stimulates both ATPase and RNA helicase activities of UPF1. Binds spliced mRNA. Involved in nonsense-mediated decay (NMD) of mRNAs containing premature stop codons by associating with the nuclear exon junction complex (EJC). Required for plant development and adaptation to environmental stresses, including plant defense and response to wounding. This chain is Regulator of nonsense transcripts UPF2 (UPF2), found in Arabidopsis thaliana (Mouse-ear cress).